A 338-amino-acid polypeptide reads, in one-letter code: Biotin synthase (338 aa).

The Radical SAM core domain occupies glutamate 59 to arginine 284. The [4Fe-4S] cluster site is built by cysteine 74, cysteine 78, and cysteine 81. Residues cysteine 117, cysteine 209, and arginine 279 each coordinate [2Fe-2S] cluster.

Belongs to the radical SAM superfamily. Biotin synthase family. In terms of assembly, homodimer. The cofactor is [4Fe-4S] cluster. [2Fe-2S] cluster is required as a cofactor.

The catalysed reaction is (4R,5S)-dethiobiotin + (sulfur carrier)-SH + 2 reduced [2Fe-2S]-[ferredoxin] + 2 S-adenosyl-L-methionine = (sulfur carrier)-H + biotin + 2 5'-deoxyadenosine + 2 L-methionine + 2 oxidized [2Fe-2S]-[ferredoxin]. It functions in the pathway cofactor biosynthesis; biotin biosynthesis; biotin from 7,8-diaminononanoate: step 2/2. Catalyzes the conversion of dethiobiotin (DTB) to biotin by the insertion of a sulfur atom into dethiobiotin via a radical-based mechanism. In Corynebacterium urealyticum (strain ATCC 43042 / DSM 7109), this protein is Biotin synthase.